The primary structure comprises 82 residues: MNQEIFERVKKVVIDQLEVPEDSVVPEASFANDLNADSLDTVELVMALEEEFDIEIPDEEAEKIDTVGKAVEHISEKVEATA.

One can recognise a Carrier domain in the interval 3–78; the sequence is QEIFERVKKV…KAVEHISEKV (76 aa). The residue at position 38 (serine 38) is an O-(pantetheine 4'-phosphoryl)serine.

Belongs to the acyl carrier protein (ACP) family. 4'-phosphopantetheine is transferred from CoA to a specific serine of apo-ACP by AcpS. This modification is essential for activity because fatty acids are bound in thioester linkage to the sulfhydryl of the prosthetic group.

It localises to the cytoplasm. Its pathway is lipid metabolism; fatty acid biosynthesis. Its function is as follows. Carrier of the growing fatty acid chain in fatty acid biosynthesis. This Gloeothece citriformis (strain PCC 7424) (Cyanothece sp. (strain PCC 7424)) protein is Acyl carrier protein.